The primary structure comprises 344 residues: Glycerol-3-phosphate dehydrogenase [NAD(P)+] (344 aa).

Residues Ser23, Trp24, Arg44, and Lys118 each contribute to the NADPH site. Lys118, Gly147, and Thr149 together coordinate sn-glycerol 3-phosphate. Position 151 (Ala151) interacts with NADPH. 5 residues coordinate sn-glycerol 3-phosphate: Lys202, Asp255, Ser265, Arg266, and Asn267. Catalysis depends on Lys202, which acts as the Proton acceptor. Arg266 is an NADPH binding site. NADPH is bound at residue Glu292.

Belongs to the NAD-dependent glycerol-3-phosphate dehydrogenase family.

The protein resides in the cytoplasm. The enzyme catalyses sn-glycerol 3-phosphate + NAD(+) = dihydroxyacetone phosphate + NADH + H(+). It catalyses the reaction sn-glycerol 3-phosphate + NADP(+) = dihydroxyacetone phosphate + NADPH + H(+). The protein operates within membrane lipid metabolism; glycerophospholipid metabolism. Functionally, catalyzes the reduction of the glycolytic intermediate dihydroxyacetone phosphate (DHAP) to sn-glycerol 3-phosphate (G3P), the key precursor for phospholipid synthesis. In Nitrosococcus oceani (strain ATCC 19707 / BCRC 17464 / JCM 30415 / NCIMB 11848 / C-107), this protein is Glycerol-3-phosphate dehydrogenase [NAD(P)+].